Consider the following 236-residue polypeptide: MPTIVLSLGGSILLPDIDRPNIKPYISVLTRISAKNRLFVVVGGGGTARQYISLARSFEADEAFSDELGIMVTRLNATLLVGALGQAAYPCVVTSHTEALCAAETGKIVVMGGITPGQTTDAVAAVLAERTGADIFINLTAVDGIYSADPRKDPAAKRFETMNPAELLDVVIGQQAVAGVNTVMDIVAVKMVERCGIPLLVMDGRDPALLESTLETGRFVGTLVTRNGKNPFPLKK.

Residue 10–11 (GS) participates in ATP binding. Position 44 (glycine 44) interacts with UMP. Positions 45 and 49 each coordinate ATP. UMP is bound by residues aspartate 66 and 114 to 120 (ITPGQTT). Positions 140, 146, and 149 each coordinate ATP.

This sequence belongs to the UMP kinase family. As to quaternary structure, homohexamer.

It is found in the cytoplasm. The catalysed reaction is UMP + ATP = UDP + ADP. Its pathway is pyrimidine metabolism; CTP biosynthesis via de novo pathway; UDP from UMP (UMPK route): step 1/1. Its activity is regulated as follows. Inhibited by UTP. Functionally, catalyzes the reversible phosphorylation of UMP to UDP. The sequence is that of Uridylate kinase from Methanospirillum hungatei JF-1 (strain ATCC 27890 / DSM 864 / NBRC 100397 / JF-1).